Reading from the N-terminus, the 316-residue chain is tRNA dimethylallyltransferase (316 aa).

17 to 24 (GPTASGKT) serves as a coordination point for ATP. 19 to 24 (TASGKT) serves as a coordination point for substrate. Interaction with substrate tRNA regions lie at residues 42–45 (DSAL), 166–170 (QRLSR), and 247–252 (RCVGYR).

It belongs to the IPP transferase family. Monomer. Requires Mg(2+) as cofactor.

It catalyses the reaction adenosine(37) in tRNA + dimethylallyl diphosphate = N(6)-dimethylallyladenosine(37) in tRNA + diphosphate. Functionally, catalyzes the transfer of a dimethylallyl group onto the adenine at position 37 in tRNAs that read codons beginning with uridine, leading to the formation of N6-(dimethylallyl)adenosine (i(6)A). The sequence is that of tRNA dimethylallyltransferase from Salmonella paratyphi C (strain RKS4594).